We begin with the raw amino-acid sequence, 645 residues long: ATP-dependent zinc metalloprotease FtsH (645 aa).

Topologically, residues 1-6 (MDQRPK) are cytoplasmic. A helical membrane pass occupies residues 7 to 27 (FGMILFYIVLGVFLMVALRGL). The Periplasmic segment spans residues 28–110 (YTTDTNLSVP…VVYEKGNDSL (83 aa)). Residues 111–131 (FWVNLLGTIIPLAIIVFIWFF) form a helical membrane-spanning segment. At 132–645 (AMRSLSGRNS…AKEGNEDEKN (514 aa)) the chain is on the cytoplasmic side. An ATP-binding site is contributed by 204-211 (GPPGTGKT). Position 426 (His-426) interacts with Zn(2+). Glu-427 is an active-site residue. His-430 and Asp-503 together coordinate Zn(2+). The tract at residues 623–645 (SKRKVSAVSTNEEAKEGNEDEKN) is disordered. A compositionally biased stretch (basic and acidic residues) spans 634 to 645 (EEAKEGNEDEKN).

It in the central section; belongs to the AAA ATPase family. In the C-terminal section; belongs to the peptidase M41 family. As to quaternary structure, homohexamer. It depends on Zn(2+) as a cofactor.

The protein resides in the cell inner membrane. Its function is as follows. Acts as a processive, ATP-dependent zinc metallopeptidase for both cytoplasmic and membrane proteins. Plays a role in the quality control of integral membrane proteins. The chain is ATP-dependent zinc metalloprotease FtsH from Kosmotoga olearia (strain ATCC BAA-1733 / DSM 21960 / TBF 19.5.1).